Consider the following 875-residue polypeptide: Alanine--tRNA ligase (875 aa).

Residues His-564, His-568, Cys-666, and His-670 each contribute to the Zn(2+) site.

It belongs to the class-II aminoacyl-tRNA synthetase family. In terms of assembly, homotetramer. Zn(2+) is required as a cofactor.

The protein localises to the cytoplasm. The catalysed reaction is tRNA(Ala) + L-alanine + ATP = L-alanyl-tRNA(Ala) + AMP + diphosphate. In terms of biological role, catalyzes the attachment of alanine to tRNA(Ala) in a two-step reaction: alanine is first activated by ATP to form Ala-AMP and then transferred to the acceptor end of tRNA(Ala). Also edits incorrectly charged Ser-tRNA(Ala) and Gly-tRNA(Ala) via its editing domain. The sequence is that of Alanine--tRNA ligase from Yersinia pestis bv. Antiqua (strain Angola).